The chain runs to 379 residues: Chaperone protein DnaJ (379 aa).

A J domain is found at 5–70; the sequence is DYYELLEVSR…QKRAAYDQFG (66 aa). The segment at 135–213 adopts a CR-type zinc-finger fold; sequence GKEVEITVPR…CHGQGRVRES (79 aa). Zn(2+)-binding residues include Cys-148, Cys-151, Cys-165, Cys-168, Cys-187, Cys-190, Cys-201, and Cys-204. CXXCXGXG motif repeat units follow at residues 148–155, 165–172, 187–194, and 201–208; these read CTVCEGSG, CETCQGMG, CPTCHGEG, and CASCHGQG.

This sequence belongs to the DnaJ family. In terms of assembly, homodimer. The cofactor is Zn(2+).

It is found in the cytoplasm. In terms of biological role, participates actively in the response to hyperosmotic and heat shock by preventing the aggregation of stress-denatured proteins and by disaggregating proteins, also in an autonomous, DnaK-independent fashion. Unfolded proteins bind initially to DnaJ; upon interaction with the DnaJ-bound protein, DnaK hydrolyzes its bound ATP, resulting in the formation of a stable complex. GrpE releases ADP from DnaK; ATP binding to DnaK triggers the release of the substrate protein, thus completing the reaction cycle. Several rounds of ATP-dependent interactions between DnaJ, DnaK and GrpE are required for fully efficient folding. Also involved, together with DnaK and GrpE, in the DNA replication of plasmids through activation of initiation proteins. This Legionella pneumophila (strain Lens) protein is Chaperone protein DnaJ.